The sequence spans 496 residues: Genome polyprotein (496 aa).

Over 1 to 447 the chain is Extracellular; that stretch reads SRCTHLENRD…HTVLGGAFNS (447 aa). Cystine bridges form between Cys3–Cys30, Cys60–Cys116, Cys60–Cys121, Cys74–Cys105, Cys92–Cys116, and Cys92–Cys121. Positions 98–111 are fusion peptide; sequence DRGWGNHCGLFGKG. Residue Asn154 is glycosylated (N-linked (GlcNAc...) asparagine; by host). 2 cysteine pairs are disulfide-bonded: Cys186–Cys290 and Cys307–Cys338. Residues 448-468 form a helical membrane-spanning segment; it reads IFGGVGFLPKLLMGVALAWLG. Over 469–479 the chain is Cytoplasmic; the sequence is LNTRNPTMSMS. The chain crosses the membrane as a helical span at residues 480–496; that stretch reads FLMAGGLVLAMTLGVGA.

As to quaternary structure, homodimer; in the endoplasmic reticulum and Golgi. Post-translationally, N-glycosylated.

Its subcellular location is the virion membrane. The protein resides in the host endoplasmic reticulum membrane. Binds to host cell surface receptor and mediates fusion between viral and cellular membranes. Envelope protein is synthesized in the endoplasmic reticulum in the form of heterodimer with protein prM. They play a role in virion budding in the ER, and the newly formed immature particle is covered with 60 spikes composed of heterodimer between precursor prM and envelope protein E. The virion is transported to the Golgi apparatus where the low pH causes dissociation of PrM-E heterodimers and formation of E homodimers. prM-E cleavage is ineficient, and many virions are only partially matured. These uncleaved prM would play a role in immune evasion. This chain is Genome polyprotein, found in Bos taurus (Bovine).